The sequence spans 337 residues: Ribonucleoside-diphosphate reductase small subunit (337 aa).

A disordered region spans residues 1 to 22 (MDPAVSPASTDPLDTHASGAGA). Residues Asp91, Glu121, and His124 each contribute to the Fe cation site. The active site involves Tyr128. A helical transmembrane segment spans residues 177–197 (FILMILIEGVFFAASFAAIAY). Positions 184, 218, and 221 each coordinate Fe cation.

The protein belongs to the ribonucleoside diphosphate reductase small chain family. Heterotetramer composed of a homodimer of the large subunit (R1) and a homodimer of the small subunit (R2). Larger multisubunit protein complex are also active, composed of (R1)n(R2)n. It depends on Fe cation as a cofactor.

Its subcellular location is the host membrane. The catalysed reaction is a 2'-deoxyribonucleoside 5'-diphosphate + [thioredoxin]-disulfide + H2O = a ribonucleoside 5'-diphosphate + [thioredoxin]-dithiol. Its function is as follows. Ribonucleoside-diphosphate reductase holoenzyme provides the precursors necessary for viral DNA synthesis. Allows virus growth in non-dividing cells, as well as reactivation from latency in infected hosts. Catalyzes the biosynthesis of deoxyribonucleotides from the corresponding ribonucleotides. The chain is Ribonucleoside-diphosphate reductase small subunit from Human herpesvirus 2 (strain 333) (HHV-2).